We begin with the raw amino-acid sequence, 204 residues long: Probable molybdenum cofactor guanylyltransferase (204 aa).

GTP-binding positions include 10-12 (LSG), Lys-22, Asp-75, and Asp-104. Asp-104 is a Mg(2+) binding site.

Belongs to the MobA family. Mg(2+) is required as a cofactor.

Its subcellular location is the cytoplasm. It carries out the reaction Mo-molybdopterin + GTP + H(+) = Mo-molybdopterin guanine dinucleotide + diphosphate. Functionally, transfers a GMP moiety from GTP to Mo-molybdopterin (Mo-MPT) cofactor (Moco or molybdenum cofactor) to form Mo-molybdopterin guanine dinucleotide (Mo-MGD) cofactor. The chain is Probable molybdenum cofactor guanylyltransferase from Methanocaldococcus jannaschii (strain ATCC 43067 / DSM 2661 / JAL-1 / JCM 10045 / NBRC 100440) (Methanococcus jannaschii).